The following is a 344-amino-acid chain: Succinylglutamate desuccinylase (344 aa).

His63, Glu66, and His160 together coordinate Zn(2+). Glu224 is a catalytic residue.

The protein belongs to the AspA/AstE family. Succinylglutamate desuccinylase subfamily. It depends on Zn(2+) as a cofactor.

It carries out the reaction N-succinyl-L-glutamate + H2O = L-glutamate + succinate. It participates in amino-acid degradation; L-arginine degradation via AST pathway; L-glutamate and succinate from L-arginine: step 5/5. Transforms N(2)-succinylglutamate into succinate and glutamate. The chain is Succinylglutamate desuccinylase from Shewanella sp. (strain MR-4).